The primary structure comprises 414 residues: Putative transporter YoaB (414 aa).

The Cytoplasmic segment spans residues 1–11 (MLDKIGIPKRL). A helical membrane pass occupies residues 12–32 (AWGFLGVVLFMMGDGLEQGWL). At 33–47 (SPFLIENGLTVQQSA) the chain is on the extracellular side. A helical membrane pass occupies residues 48–68 (SIFSIYGIALAIASWFSGVCL). Over 69–75 (EAFGAKR) the chain is Cytoplasmic. The helical transmembrane segment at 76–96 (TMFMGLLFYVIGTAAFIVFGF) threads the bilayer. The Extracellular portion of the chain corresponds to 97–107 (EQLNLPVMYVT). The chain crosses the membrane as a helical span at residues 108-128 (YFVKGLGYPLFAYSFLTWVIY). Residues 129-136 (RTPQSKLS) lie on the Cytoplasmic side of the membrane. Residues 137 to 157 (TAVGWFWIAYCLGMFVFGAWY) form a helical membrane-spanning segment. Residues 158 to 167 (SSYAIKAFGY) are Extracellular-facing. Residues 168–188 (LNTLWSSIFWVCLGAFFALFI) form a helical membrane-spanning segment. The Cytoplasmic segment spans residues 189–219 (NKDRFEKKKRKRSETAEELLKGVTILFTNPR). A helical transmembrane segment spans residues 220–240 (VLTGGIIRIINSIGTYGFPVF). Residues 241–255 (LPMHMAQHGISTNVW) lie on the Extracellular side of the membrane. Residues 256–276 (LQIWGTIFLGNIVFNLIFGIV) traverse the membrane as a helical segment. Residues 277-286 (GDKFGWKNTV) are Cytoplasmic-facing. The helical transmembrane segment at 287–307 (IWFGGVGCGIFTVLLYYAPVF) threads the bilayer. The Extracellular segment spans residues 308-316 (SGGSLAVVS). The chain crosses the membrane as a helical span at residues 317-337 (VIGFIWGGLLAGYVPIGAIVP). Residues 338 to 343 (TVAGKD) lie on the Cytoplasmic side of the membrane. The chain crosses the membrane as a helical span at residues 344–364 (KGAAMSVLNLAAGLSAFVGPA). Over 365-375 (LAWLFIGLVGA) the chain is Extracellular. Residues 376 to 398 (QGVVWIFAALYLASAVLTKCIHI) traverse the membrane as a helical segment. Topologically, residues 399–414 (PEEKAVKEETSPQYAS) are cytoplasmic.

This sequence belongs to the major facilitator superfamily. Sugar transporter (TC 2.A.1.1) family. CsbX subfamily.

The protein localises to the cell membrane. The sequence is that of Putative transporter YoaB (yoaB) from Bacillus subtilis (strain 168).